The chain runs to 355 residues: UDP-N-acetylglucosamine--N-acetylmuramyl-(pentapeptide) pyrophosphoryl-undecaprenol N-acetylglucosamine transferase (355 aa).

UDP-N-acetyl-alpha-D-glucosamine is bound by residues 14-16 (TGG), Asn123, Arg164, Ser190, and Gln284.

It belongs to the glycosyltransferase 28 family. MurG subfamily.

It localises to the cell inner membrane. It catalyses the reaction di-trans,octa-cis-undecaprenyl diphospho-N-acetyl-alpha-D-muramoyl-L-alanyl-D-glutamyl-meso-2,6-diaminopimeloyl-D-alanyl-D-alanine + UDP-N-acetyl-alpha-D-glucosamine = di-trans,octa-cis-undecaprenyl diphospho-[N-acetyl-alpha-D-glucosaminyl-(1-&gt;4)]-N-acetyl-alpha-D-muramoyl-L-alanyl-D-glutamyl-meso-2,6-diaminopimeloyl-D-alanyl-D-alanine + UDP + H(+). It participates in cell wall biogenesis; peptidoglycan biosynthesis. Cell wall formation. Catalyzes the transfer of a GlcNAc subunit on undecaprenyl-pyrophosphoryl-MurNAc-pentapeptide (lipid intermediate I) to form undecaprenyl-pyrophosphoryl-MurNAc-(pentapeptide)GlcNAc (lipid intermediate II). In Synechocystis sp. (strain ATCC 27184 / PCC 6803 / Kazusa), this protein is UDP-N-acetylglucosamine--N-acetylmuramyl-(pentapeptide) pyrophosphoryl-undecaprenol N-acetylglucosamine transferase.